The chain runs to 512 residues: Transmembrane protein 102 (512 aa).

Over 1-267 (MASAVWGNAP…EAWPTLCPAQ (267 aa)) the chain is Extracellular. The interval 168–258 (PVPGGRDWIH…PGPQPSEARE (91 aa)) is disordered. Composition is skewed to basic and acidic residues over residues 174–186 (DWIH…EGPR) and 195–209 (PHSD…ESLE). The segment covering 210–226 (KSPSNVSVPESPQQNLT) has biased composition (polar residues). A helical membrane pass occupies residues 268–284 (VAAWFFASLAAVAESLF). Residues 285 to 512 (PVPGAPRLVH…GLAGVGAGSH (228 aa)) are Cytoplasmic-facing.

As to quaternary structure, interacts with CSF2RB; this interaction occurs preferentially in the absence of CSF2.

Its subcellular location is the cell membrane. Selectively involved in CSF2 deprivation-induced apoptosis via a mitochondria-dependent pathway. The sequence is that of Transmembrane protein 102 (TMEM102) from Bos taurus (Bovine).